The chain runs to 309 residues: MEKVLVFGHKNPDTDAICSAIAYAELKKELGMNAEPVRLGEISGETQFALDYFKVEGPRFVETVANEVDNVILVDHNERQQSANDIESVRVLEVIDHHRIANFETSDPIYYRCEPVGCTATILNKMYKENGVTIRKEVAGLMLSAIISDSLLFKSPTCTEQDVAAARELAEIAGVDADKYGLEMLKAGADLSGKTMEQLISLDAKEFQMGNAKVEIAQVNAVDTNDVLVHQAELEKVISAVVEEKGLDLFLFVVTDILTNDSVGLAIGKAANIVEKAYNVSLENNTATLKGVVSRKKQIVPVLTEAFQA.

Mn(2+) contacts are provided by histidine 9, aspartate 13, aspartate 15, aspartate 75, histidine 97, and aspartate 149.

The protein belongs to the PPase class C family. Requires Mn(2+) as cofactor.

Its subcellular location is the cytoplasm. The catalysed reaction is diphosphate + H2O = 2 phosphate + H(+). The protein is Probable manganese-dependent inorganic pyrophosphatase of Bacillus anthracis (strain CDC 684 / NRRL 3495).